We begin with the raw amino-acid sequence, 428 residues long: Trigger factor (428 aa).

A PPIase FKBP-type domain is found at A165–P240.

Belongs to the FKBP-type PPIase family. Tig subfamily.

The protein resides in the cytoplasm. It carries out the reaction [protein]-peptidylproline (omega=180) = [protein]-peptidylproline (omega=0). Functionally, involved in protein export. Acts as a chaperone by maintaining the newly synthesized protein in an open conformation. Functions as a peptidyl-prolyl cis-trans isomerase. This is Trigger factor from Prosthecochloris aestuarii (strain DSM 271 / SK 413).